A 229-amino-acid polypeptide reads, in one-letter code: Trypsin (229 aa).

Residues 1-7 (APDDDDK) constitute a propeptide, activation peptide. Positions 8 to 227 (IVGGYECPKH…YVSWIHETIA (220 aa)) constitute a Peptidase S1 domain. Disulfide bonds link Cys14-Cys143, Cys32-Cys48, Cys116-Cys216, Cys123-Cys189, Cys154-Cys168, and Cys179-Cys203. Residue His47 is the Charge relay system of the active site. Ca(2+) contacts are provided by Glu59 and Glu69. Asp91 serves as the catalytic Charge relay system. The active-site Charge relay system is Ser183.

It belongs to the peptidase S1 family. Ca(2+) is required as a cofactor.

It localises to the secreted. It is found in the extracellular space. It carries out the reaction Preferential cleavage: Arg-|-Xaa, Lys-|-Xaa.. The protein is Trypsin of Squalus acanthias (Spiny dogfish).